We begin with the raw amino-acid sequence, 339 residues long: DNA-directed RNA polymerase subunit alpha (339 aa).

The tract at residues 1 to 233 (MVREEVAGST…DLFLPFLHAE (233 aa)) is alpha N-terminal domain (alpha-NTD). The alpha C-terminal domain (alpha-CTD) stretch occupies residues 264-339 (KKGIPLNYIF…IDLLKNKLSF (76 aa)).

The protein belongs to the RNA polymerase alpha chain family. As to quaternary structure, in plastids the minimal PEP RNA polymerase catalytic core is composed of four subunits: alpha, beta, beta', and beta''. When a (nuclear-encoded) sigma factor is associated with the core the holoenzyme is formed, which can initiate transcription.

It is found in the plastid. The protein localises to the chloroplast. It catalyses the reaction RNA(n) + a ribonucleoside 5'-triphosphate = RNA(n+1) + diphosphate. Functionally, DNA-dependent RNA polymerase catalyzes the transcription of DNA into RNA using the four ribonucleoside triphosphates as substrates. The sequence is that of DNA-directed RNA polymerase subunit alpha from Psathyrostachys rupestris (Hordeum rupestre).